Consider the following 740-residue polypeptide: MAPSFDTLSEQDLHEEEEEEIDFSDLKAQYEVKLEEGLDTFVVIDGLPVVPEESRQKLIKFLLRKLNTVGHTSEDAVFMPLNDKNMSEGYAFVEFETPEQAVAAVKQLHGTPLDKKHTLLVNKLMDIERYGREGRIDEEYKPPAIEPFKEKEHLRSWLADPNARDQFALHRGDKVGVFWNNKNNPPENVVDRAHWTQLFAQWSPKGTYLASVHPQGVQLWGGPAFSKQKQFPHPFVQLIEFSPGESYLTTWSARPIQVEEGQSILTYEEEGKNIIVWDIATGKPLRSFVSHDLTAGPAGDAEPKKKVQWPAFKWSADEKYVARMLQHQSISIYELPRMNLLGKTSVKIDGVMDFEWSPATVTREGVKQYEQLLCFWTPEIGSSPARVAMMSVPSKEIVRTRNLFNVSDVKLHWQSQGSYVCVKVDRHSKSKKSMATNLEIFRVREKGVPVEVVDSLKDTVINFAWEPNGNRFVLITTGEAVAGAAVAPKTAVSFFAPEKKGGAIGNFKLIRTIEKKNSNAIYWSPKGRFVVVATVHSQTSFDMDFWDMDFEGEKPEAEKDFAANLQLMKTIEHYGVTDIDWDPTGRYVVSSASVWTHQLENGWNMHTFAGQTLSENPTDKFKQFLWRPRPPTLLSKEEQKQVRKNLREYSKEFDEEDRYAVDIANTAVVEKRKRVLNEWVAWIRREKELLAEEKDAYGLPEEADDPKLAKDAAATTQEQGETVVEEIVEEIIEESEEVIG.

The span at 1-10 (MAPSFDTLSE) shows a compositional bias: polar residues. Residues 1–20 (MAPSFDTLSEQDLHEEEEEE) form a disordered region. Positions 40–126 (TFVVIDGLPV…HTLLVNKLMD (87 aa)) constitute an RRM domain. WD repeat units lie at residues 193-230 (AHWT…KQKQ), 232-289 (PHPF…RSFV), 302-343 (EPKK…LLGK), 455-496 (SLKD…SFFA), 513-556 (IEKK…EKPE), and 571-609 (IEHY…HTFA). The interval 695-721 (DAYGLPEEADDPKLAKDAAATTQEQGE) is disordered.

This sequence belongs to the eIF-3 subunit B family. In terms of assembly, component of the eukaryotic translation initiation factor 3 (eIF-3) complex.

It localises to the cytoplasm. In terms of biological role, RNA-binding component of the eukaryotic translation initiation factor 3 (eIF-3) complex, which is involved in protein synthesis of a specialized repertoire of mRNAs and, together with other initiation factors, stimulates binding of mRNA and methionyl-tRNAi to the 40S ribosome. The eIF-3 complex specifically targets and initiates translation of a subset of mRNAs involved in cell proliferation. The polypeptide is Eukaryotic translation initiation factor 3 subunit B (prt1) (Neosartorya fischeri (strain ATCC 1020 / DSM 3700 / CBS 544.65 / FGSC A1164 / JCM 1740 / NRRL 181 / WB 181) (Aspergillus fischerianus)).